The primary structure comprises 51 residues: Large ribosomal subunit protein eL39 (51 aa).

It belongs to the eukaryotic ribosomal protein eL39 family.

This chain is Large ribosomal subunit protein eL39, found in Methanosarcina acetivorans (strain ATCC 35395 / DSM 2834 / JCM 12185 / C2A).